Reading from the N-terminus, the 575-residue chain is DNA-directed RNA polymerase subunit beta' (575 aa).

Cys64, Cys66, Cys85, and Cys88 together coordinate Zn(2+). Mg(2+)-binding residues include Asp440, Asp442, and Asp444.

This sequence belongs to the RNA polymerase beta' chain family. RpoC1 subfamily. As to quaternary structure, in plastids the minimal PEP RNA polymerase catalytic core is composed of four subunits: alpha, beta, beta', and beta''. When a (nuclear-encoded) sigma factor is associated with the core the holoenzyme is formed, which can initiate transcription. The cofactor is Mg(2+). Requires Zn(2+) as cofactor.

It is found in the plastid. It catalyses the reaction RNA(n) + a ribonucleoside 5'-triphosphate = RNA(n+1) + diphosphate. Its function is as follows. DNA-dependent RNA polymerase catalyzes the transcription of DNA into RNA using the four ribonucleoside triphosphates as substrates. The sequence is that of DNA-directed RNA polymerase subunit beta' from Euglena longa (Euglenophycean alga).